The sequence spans 242 residues: MSQITMRQMIEAGVHFGHQTRFWNPKMAQYIFGARNKIHIVNLEKTLPMFQDAQEAVRRLVANKGTVLFVGTKRQARDIIREEATRAGMPFVDYRWLGGMLTNYKTVKQSIKRLEEKTAALENAAESGFSKKEILEMQRDVEKLERSLGGIKNMKGLPDAIFVIDTGYQKGTLVEAEKLGIPVIAVVDTNNSPDGVKYVIPGNDDSAKAIRLYCRGIADAVLEGKNQALQETVAAAQEAAAE.

The protein belongs to the universal ribosomal protein uS2 family.

This is Small ribosomal subunit protein uS2 from Neisseria meningitidis serogroup B (strain ATCC BAA-335 / MC58).